The chain runs to 347 residues: GTP 3',8-cyclase (347 aa).

Positions 12–242 constitute a Radical SAM core domain; that stretch reads FRPFGVLRLS…QRIDARWPLR (231 aa). A GTP-binding site is contributed by Arg-19. The [4Fe-4S] cluster site is built by Cys-26 and Cys-30. An S-adenosyl-L-methionine-binding site is contributed by Tyr-32. Cys-33 provides a ligand contact to [4Fe-4S] cluster. Arg-65 is a binding site for GTP. Gly-69 serves as a coordination point for S-adenosyl-L-methionine. A GTP-binding site is contributed by Thr-104. Ser-129 contributes to the S-adenosyl-L-methionine binding site. Lys-178 lines the GTP pocket. Met-212 contacts S-adenosyl-L-methionine. [4Fe-4S] cluster-binding residues include Cys-275 and Cys-278. 280-282 is a binding site for GTP; sequence RLR. Cys-292 lines the [4Fe-4S] cluster pocket.

The protein belongs to the radical SAM superfamily. MoaA family. Monomer and homodimer. It depends on [4Fe-4S] cluster as a cofactor.

The catalysed reaction is GTP + AH2 + S-adenosyl-L-methionine = (8S)-3',8-cyclo-7,8-dihydroguanosine 5'-triphosphate + 5'-deoxyadenosine + L-methionine + A + H(+). Its pathway is cofactor biosynthesis; molybdopterin biosynthesis. In terms of biological role, catalyzes the cyclization of GTP to (8S)-3',8-cyclo-7,8-dihydroguanosine 5'-triphosphate. The chain is GTP 3',8-cyclase from Synechococcus sp. (strain WH7803).